The following is a 146-amino-acid chain: MKLNELHPSEGSRHARKRVGRGTSSGFGKTSGRGQKGQHARSGGNTRLGFEGGQMPLFRTMPKRGFKNINRKEYAIVNLADLNKFEEGSVVDFEALKAKGLVKKQLSGVKVLGNGDLNVKLTVKVNKVSEAAKSAIEAAGGTVEVI.

Over residues 1–13 (MKLNELHPSEGSR) the composition is skewed to basic and acidic residues. The segment at 1–56 (MKLNELHPSEGSRHARKRVGRGTSSGFGKTSGRGQKGQHARSGGNTRLGFEGGQMP) is disordered. Gly residues predominate over residues 23–35 (TSSGFGKTSGRGQ).

Belongs to the universal ribosomal protein uL15 family. Part of the 50S ribosomal subunit.

Binds to the 23S rRNA. The chain is Large ribosomal subunit protein uL15 from Lactobacillus delbrueckii subsp. bulgaricus (strain ATCC 11842 / DSM 20081 / BCRC 10696 / JCM 1002 / NBRC 13953 / NCIMB 11778 / NCTC 12712 / WDCM 00102 / Lb 14).